A 62-amino-acid chain; its full sequence is Conotoxin TxIC (62 aa).

The N-terminal stretch at 1–22 is a signal peptide; sequence MHCLPIFVILLLLTASGPSVDA. Residues 23–47 constitute a propeptide that is removed on maturation; sequence QLKTKDDVPLSSFRDHAKSTLRRLQ. Disulfide bonds link cysteine 52–cysteine 58 and cysteine 53–cysteine 61. Proline 60 carries the 4-hydroxyproline modification. The residue at position 61 (cysteine 61) is a Cysteine amide.

Belongs to the conotoxin A superfamily. In terms of tissue distribution, expressed by the venom duct.

The protein resides in the secreted. This is Conotoxin TxIC from Conus textile (Cloth-of-gold cone).